We begin with the raw amino-acid sequence, 399 residues long: Chorismate synthase (399 aa).

The segment at Ile-41–Gln-72 is disordered. Arg-48 contributes to the NADP(+) binding site. FMN is bound by residues Arg-125–Ser-127, Gly-288, His-303–Ser-307, and Arg-330. 2 stretches are compositionally biased toward basic and acidic residues: residues Pro-363–Tyr-377 and Ala-389–Asp-399. The disordered stretch occupies residues Pro-363–Asp-399.

Belongs to the chorismate synthase family. The cofactor is FMNH2.

The enzyme catalyses 5-O-(1-carboxyvinyl)-3-phosphoshikimate = chorismate + phosphate. Its pathway is metabolic intermediate biosynthesis; chorismate biosynthesis; chorismate from D-erythrose 4-phosphate and phosphoenolpyruvate: step 7/7. Its function is as follows. Catalyzes the anti-1,4-elimination of the C-3 phosphate and the C-6 proR hydrogen from 5-enolpyruvylshikimate-3-phosphate (EPSP) to yield chorismate, which is the branch point compound that serves as the starting substrate for the three terminal pathways of aromatic amino acid biosynthesis. This reaction introduces a second double bond into the aromatic ring system. In Haloarcula marismortui (strain ATCC 43049 / DSM 3752 / JCM 8966 / VKM B-1809) (Halobacterium marismortui), this protein is Chorismate synthase.